A 443-amino-acid chain; its full sequence is Phosphoribosylamine--glycine ligase (443 aa).

The ATP-grasp domain occupies 109–324 (RNLFKKYNIK…FLDVCFGISN (216 aa)). Residue 140–202 (MTGLGKDVVV…EEKLVGVEFT (63 aa)) coordinates ATP. Residues glutamine 282, glutamate 294, and asparagine 296 each contribute to the Mg(2+) site. Mn(2+) is bound by residues glutamine 282, glutamate 294, and asparagine 296.

This sequence belongs to the GARS family. Requires Mg(2+) as cofactor. The cofactor is Mn(2+).

It carries out the reaction 5-phospho-beta-D-ribosylamine + glycine + ATP = N(1)-(5-phospho-beta-D-ribosyl)glycinamide + ADP + phosphate + H(+). The protein operates within purine metabolism; IMP biosynthesis via de novo pathway; N(1)-(5-phospho-D-ribosyl)glycinamide from 5-phospho-alpha-D-ribose 1-diphosphate: step 2/2. The protein is Phosphoribosylamine--glycine ligase of Methanococcus vannielii (strain ATCC 35089 / DSM 1224 / JCM 13029 / OCM 148 / SB).